A 656-amino-acid chain; its full sequence is Pheromone-regulated membrane protein 2 (656 aa).

The next 4 membrane-spanning stretches (helical) occupy residues 16–36, 320–340, 422–442, and 634–654; these read FFSC…ILTI, IIFT…ERIL, WIIS…LIHW, and WGLL…FIIL.

Its subcellular location is the membrane. In Saccharomyces cerevisiae (strain ATCC 204508 / S288c) (Baker's yeast), this protein is Pheromone-regulated membrane protein 2 (PRM2).